The sequence spans 408 residues: Peptidase T (408 aa).

A Zn(2+)-binding site is contributed by His78. Asp80 is an active-site residue. Asp140 is a binding site for Zn(2+). Glu173 serves as the catalytic Proton acceptor. Zn(2+) contacts are provided by Glu174, Asp196, and His379.

Belongs to the peptidase M20B family. It depends on Zn(2+) as a cofactor.

Its subcellular location is the cytoplasm. It carries out the reaction Release of the N-terminal residue from a tripeptide.. In terms of biological role, cleaves the N-terminal amino acid of tripeptides. This chain is Peptidase T, found in Escherichia coli (strain K12 / MC4100 / BW2952).